Reading from the N-terminus, the 226-residue chain is Probable functional amyloid protease FapD (226 aa).

The signal sequence occupies residues 1–18; the sequence is MRTLILSLLLLVDLTTQA. A Peptidase C39 domain is found at 50 to 180; that stretch reads QKTDFSCGAA…KGWNGIVFAV (131 aa). The active site involves Cys56.

The protein belongs to the FapD family.

The protein localises to the periplasm. Its function is as follows. Probable protease that might be involved in processing fibril precursors. Upon overexpression of the endogenous six-gene locus (fapA-fapF), cells form large clumps during liquid growth, make large amounts of biofilm and produce amyloid fibrils. This Pseudomonas aeruginosa (strain ATCC 15692 / DSM 22644 / CIP 104116 / JCM 14847 / LMG 12228 / 1C / PRS 101 / PAO1) protein is Probable functional amyloid protease FapD.